A 576-amino-acid chain; its full sequence is 60 kDa heat shock protein homolog 2, mitochondrial (576 aa).

The transit peptide at 1–61 directs the protein to the mitochondrion; the sequence is MMRMFRYTNT…AVTMGPKGRN (61 aa).

The protein belongs to the chaperonin (HSP60) family. In terms of tissue distribution, first detectable expression is seen in the posterior part of the dorsal tracheal trunk at stage 14-15, which marks the beginning of terminal tracheation. In the larval gut, expression in proventriculus is stronger than in midgut and hindgut. Malpighian tubules shows low expression and late third instar larval imaginal disks and brain showed moderate expression. In larval ovary and testis, expression is strong in the posterior region.

It localises to the mitochondrion matrix. In terms of biological role, prevents misfolding and promotes the refolding and proper assembly of unfolded polypeptides generated under stress conditions. Essential for proper development of trachea, spermatogonia and spermatocytes. This is 60 kDa heat shock protein homolog 2, mitochondrial (Hsp60C) from Drosophila melanogaster (Fruit fly).